Consider the following 509-residue polypeptide: MSPADTARPQLKIRSVALDTGRENVVVISRRSRALRPEVFSGFSRVELRCNSRTLLATLLITDDDALVGPDEIGLSEPALRRFAEPAGMLATVSPATPPESLEAVRAKIRGETLSDEAIAAVIEDLAHYRYSDMEIAAFLIGSASFMTSGELLALTHAMANAGTQLTWPEPVVVDKHCIGGIPGNRTSMVVVPIVAAHGLTIPKTSSRAITSPAGTADTMEVLARVNVGAEEMKSIVAACNGCVIWGGHVNLSPADDILISVERPLSLDTREQMVASILSKKLAAGSTHLLLDLPVGPTAKLTSGAEAMRLRKLFEFVGDRFGLKVEVITTDGRQPIGHGIGPVLEARDVMAVLGNEPQAPADLREKSLRLAAHLLEYDPKLRGGAGYSRARELLDSGAALKQMQKIIDAQGPSAGRSELGDLAFDVGAASDGVVSAIDCLRLNRLARTAGAPVNKGAGIRLYKKIGDRVDQGEPLYRVFTCDPSEHDLAAAAASANNGYVLDGPNGPH.

Belongs to the thymidine/pyrimidine-nucleoside phosphorylase family. Type 2 subfamily.

The enzyme catalyses thymidine + phosphate = 2-deoxy-alpha-D-ribose 1-phosphate + thymine. The protein is Putative thymidine phosphorylase of Bradyrhizobium sp. (strain ORS 278).